The chain runs to 116 residues: NADH-ubiquinone oxidoreductase chain 3 (116 aa).

3 consecutive transmembrane segments (helical) span residues 3–23, 56–76, and 84–104; these read LVTT…TISF, FFLI…LLPL, and APTL…LGLI.

The protein belongs to the complex I subunit 3 family.

It is found in the mitochondrion membrane. It catalyses the reaction a ubiquinone + NADH + 5 H(+)(in) = a ubiquinol + NAD(+) + 4 H(+)(out). In terms of biological role, core subunit of the mitochondrial membrane respiratory chain NADH dehydrogenase (Complex I) that is believed to belong to the minimal assembly required for catalysis. Complex I functions in the transfer of electrons from NADH to the respiratory chain. The immediate electron acceptor for the enzyme is believed to be ubiquinone. This is NADH-ubiquinone oxidoreductase chain 3 (MT-ND3) from Oncorhynchus nerka (Sockeye salmon).